A 2235-amino-acid chain; its full sequence is Bridge-like lipid transfer protein family member 2 (2235 aa).

The signal sequence occupies residues methionine 1 to threonine 31. The segment at leucine 29–proline 108 is transmembrane domain. Serine 563 bears the Phosphoserine mark. N-linked (GlcNAc...) asparagine glycosylation occurs at asparagine 730. The disordered stretch occupies residues proline 1495 to serine 1529. Residues serine 1813–aspartate 1885 are a coiled coil. A phosphoserine mark is found at serine 1846, serine 2090, and serine 2094. The segment at glycine 2074 to valine 2099 is disordered.

The protein belongs to the SABRE family. As to expression, expressed in pancreas, placenta and up-regulated in breast carcinoma epithelial cells, ductal in situ carcinoma (DCIS), invasive breast carcinoma (IBC) and metastatic breast carcinoma cells (MET).

The protein resides in the cell membrane. It is found in the endoplasmic reticulum membrane. It localises to the mitochondrion membrane. Functionally, tube-forming lipid transport protein which binds to phosphatidylinositols and affects phosphatidylinositol-4,5-bisphosphate (PtdIns-4,5-P2) distribution. The protein is Bridge-like lipid transfer protein family member 2 of Homo sapiens (Human).